Consider the following 325-residue polypeptide: Lipid droplet-associated hydrolase (325 aa).

Ser139 (nucleophile) is an active-site residue. Catalysis depends on charge relay system residues Asp271 and His300.

Belongs to the AB hydrolase superfamily. LDAH family.

Its subcellular location is the lipid droplet. It is found in the endoplasmic reticulum. The enzyme catalyses a cholesterol ester + H2O = cholesterol + a fatty acid + H(+). Functionally, probable serine lipid hydrolase associated with lipid droplets. Has low cholesterol esterase activity. Appears to lack triglyceride lipase activity. Involved in cholesterol and triglyceride homeostasis; stimulates cellular triglyceride accumulation and cellular cholesterol release. Acts antagonistically with PNPLA2/ATGL in regulation of cellular lipid stores. May regulate triglyceride accumulation indirectly through stimulation of PNPLA2/ATGL ubiquitination and proteasomal degradation. Promotes microtubule-dependent lipid droplet fusion. Highly expressed in macrophage-rich areas in atherosclerotic lesions, suggesting that it could promote cholesterol ester turnover in macrophages. The chain is Lipid droplet-associated hydrolase from Rattus norvegicus (Rat).